The sequence spans 166 residues: Large ribosomal subunit protein uL10 (166 aa).

It belongs to the universal ribosomal protein uL10 family. Part of the ribosomal stalk of the 50S ribosomal subunit. The N-terminus interacts with L11 and the large rRNA to form the base of the stalk. The C-terminus forms an elongated spine to which L12 dimers bind in a sequential fashion forming a multimeric L10(L12)X complex.

Its function is as follows. Forms part of the ribosomal stalk, playing a central role in the interaction of the ribosome with GTP-bound translation factors. The polypeptide is Large ribosomal subunit protein uL10 (Ectopseudomonas mendocina (strain ymp) (Pseudomonas mendocina)).